The chain runs to 322 residues: Crystallin J1B (322 aa).

It belongs to the ADP-ribosylglycohydrolase family. J1 crystallin subfamily. Expressed in the rhopalia. Present in both the large and small eyes.

The sequence is that of Crystallin J1B from Tripedalia cystophora (Jellyfish).